The primary structure comprises 562 residues: Urocanate hydratase (562 aa).

Residues 52–53 (GG), Gln130, 176–178 (GMG), Glu196, Arg201, 242–243 (NA), 263–267 (QTSAH), 273–274 (YL), and Tyr322 each bind NAD(+). The active site involves Cys410. Gly492 provides a ligand contact to NAD(+).

The protein belongs to the urocanase family. Requires NAD(+) as cofactor.

The protein resides in the cytoplasm. The enzyme catalyses 4-imidazolone-5-propanoate = trans-urocanate + H2O. The protein operates within amino-acid degradation; L-histidine degradation into L-glutamate; N-formimidoyl-L-glutamate from L-histidine: step 2/3. In terms of biological role, catalyzes the conversion of urocanate to 4-imidazolone-5-propionate. This chain is Urocanate hydratase, found in Shewanella pealeana (strain ATCC 700345 / ANG-SQ1).